Here is a 346-residue protein sequence, read N- to C-terminus: Holliday junction branch migration complex subunit RuvB (346 aa).

The interval 1–182 (MSEPARLISP…FGIPVRLSFY (182 aa)) is large ATPase domain (RuvB-L). ATP contacts are provided by residues leucine 21, arginine 22, glycine 63, lysine 66, threonine 67, threonine 68, 129–131 (EDF), arginine 172, tyrosine 182, and arginine 219. Residue threonine 67 coordinates Mg(2+). The segment at 183–253 (TVEELELIVR…IADEALTRLL (71 aa)) is small ATPAse domain (RuvB-S). The segment at 256–346 (NVGFDQLDKR…AQFRLFQEDD (91 aa)) is head domain (RuvB-H). DNA-binding residues include arginine 292, arginine 311, and arginine 316.

The protein belongs to the RuvB family. As to quaternary structure, homohexamer. Forms an RuvA(8)-RuvB(12)-Holliday junction (HJ) complex. HJ DNA is sandwiched between 2 RuvA tetramers; dsDNA enters through RuvA and exits via RuvB. An RuvB hexamer assembles on each DNA strand where it exits the tetramer. Each RuvB hexamer is contacted by two RuvA subunits (via domain III) on 2 adjacent RuvB subunits; this complex drives branch migration. In the full resolvosome a probable DNA-RuvA(4)-RuvB(12)-RuvC(2) complex forms which resolves the HJ.

The protein localises to the cytoplasm. The enzyme catalyses ATP + H2O = ADP + phosphate + H(+). Its function is as follows. The RuvA-RuvB-RuvC complex processes Holliday junction (HJ) DNA during genetic recombination and DNA repair, while the RuvA-RuvB complex plays an important role in the rescue of blocked DNA replication forks via replication fork reversal (RFR). RuvA specifically binds to HJ cruciform DNA, conferring on it an open structure. The RuvB hexamer acts as an ATP-dependent pump, pulling dsDNA into and through the RuvAB complex. RuvB forms 2 homohexamers on either side of HJ DNA bound by 1 or 2 RuvA tetramers; 4 subunits per hexamer contact DNA at a time. Coordinated motions by a converter formed by DNA-disengaged RuvB subunits stimulates ATP hydrolysis and nucleotide exchange. Immobilization of the converter enables RuvB to convert the ATP-contained energy into a lever motion, pulling 2 nucleotides of DNA out of the RuvA tetramer per ATP hydrolyzed, thus driving DNA branch migration. The RuvB motors rotate together with the DNA substrate, which together with the progressing nucleotide cycle form the mechanistic basis for DNA recombination by continuous HJ branch migration. Branch migration allows RuvC to scan DNA until it finds its consensus sequence, where it cleaves and resolves cruciform DNA. This chain is Holliday junction branch migration complex subunit RuvB, found in Rhizobium etli (strain CIAT 652).